We begin with the raw amino-acid sequence, 210 residues long: Guanylate kinase (210 aa).

In terms of domain architecture, Guanylate kinase-like spans 5–184; the sequence is GLLIVFSGPS…AAERVKHIIE (180 aa). 12 to 19 is a binding site for ATP; that stretch reads GPSGVGKG.

Belongs to the guanylate kinase family.

Its subcellular location is the cytoplasm. The catalysed reaction is GMP + ATP = GDP + ADP. Essential for recycling GMP and indirectly, cGMP. In Streptococcus mutans serotype c (strain ATCC 700610 / UA159), this protein is Guanylate kinase.